The sequence spans 475 residues: GlcNAc-binding protein A (475 aa).

Residues 1-27 (MPKLTQLSLVTLALTAGSTLVSQTASA) form the signal peptide. Positions 28 to 195 (HGYVVSPESR…SFYNAIDVNF (168 aa)) constitute a Chitin-binding type-4 domain. In terms of domain architecture, Chitin-binding type-3 spans 426–468 (AGTKVLQPKTGKVYQCKPWPYNGYCVQWSPTATGFEPGIGNSW).

This sequence belongs to the GbpA family.

The protein localises to the secreted. Probably interacts with GlcNAc residues. May promote attachment to both epithelial cell surfaces and chitin. This Shewanella oneidensis (strain ATCC 700550 / JCM 31522 / CIP 106686 / LMG 19005 / NCIMB 14063 / MR-1) protein is GlcNAc-binding protein A.